Here is a 383-residue protein sequence, read N- to C-terminus: MDIAGSLCNASEGPVLRPEARVSGNGDLQFLGWNVPPDQIQHIPEHWLTQLEPPASMHYMLGVFYIFLFCASTVGNGMVIWIFSTSKALRTPSNMFVLNLAVFDFIMCLKAPIFIYNSFHRGFALGNTGCQIFAAIGSYSGIGAGMTNAAIGYDRLNVITKPMNRNMTFTKAIIMNVIIWLYCTPWVVLPLTQFWDRFVPEGYLTSCTFDYLTDNFDTRLFVGTIFFFSFVCPTLMIIYYYSQIVGHVFSHEKALREQAKKMNVESLRSNVDKSKDTAEIRIAKAAITICFLFFVSWTPYGVMSLIGAFGDKSLLTPGATMIPACTCKLVACIDPFVYAISHPRYRMELQKRCPWLAIDEKAPESSSAASTTTTQEQQQTTAA.

The Extracellular portion of the chain corresponds to 1-57 (MDIAGSLCNASEGPVLRPEARVSGNGDLQFLGWNVPPDQIQHIPEHWLTQLEPPASM). Residue Asn-9 is glycosylated (N-linked (GlcNAc...) asparagine). Residues 58–82 (HYMLGVFYIFLFCASTVGNGMVIWI) traverse the membrane as a helical segment. The Cytoplasmic segment spans residues 83–94 (FSTSKALRTPSN). The helical transmembrane segment at 95-117 (MFVLNLAVFDFIMCLKAPIFIYN) threads the bilayer. At 118–133 (SFHRGFALGNTGCQIF) the chain is on the extracellular side. Cys-130 and Cys-207 are disulfide-bonded. Residues 134–153 (AAIGSYSGIGAGMTNAAIGY) traverse the membrane as a helical segment. Residues 154 to 171 (DRLNVITKPMNRNMTFTK) lie on the Cytoplasmic side of the membrane. Residues 172 to 196 (AIIMNVIIWLYCTPWVVLPLTQFWD) form a helical membrane-spanning segment. Residues 197–220 (RFVPEGYLTSCTFDYLTDNFDTRL) lie on the Extracellular side of the membrane. Residues 221–248 (FVGTIFFFSFVCPTLMIIYYYSQIVGHV) form a helical membrane-spanning segment. The Cytoplasmic portion of the chain corresponds to 249 to 284 (FSHEKALREQAKKMNVESLRSNVDKSKDTAEIRIAK). A helical membrane pass occupies residues 285-308 (AAITICFLFFVSWTPYGVMSLIGA). Residues 309–316 (FGDKSLLT) lie on the Extracellular side of the membrane. A helical membrane pass occupies residues 317–341 (PGATMIPACTCKLVACIDPFVYAIS). Lys-328 carries the post-translational modification N6-(retinylidene)lysine. The Cytoplasmic portion of the chain corresponds to 342-383 (HPRYRMELQKRCPWLAIDEKAPESSSAASTTTTQEQQQTTAA). A disordered region spans residues 361–383 (KAPESSSAASTTTTQEQQQTTAA). Over residues 364–383 (ESSSAASTTTTQEQQQTTAA) the composition is skewed to low complexity.

It belongs to the G-protein coupled receptor 1 family. Opsin subfamily. Phosphorylated on some or all of the serine and threonine residues present in the C-terminal region.

It localises to the membrane. Functionally, visual pigments are the light-absorbing molecules that mediate vision. They consist of an apoprotein, opsin, covalently linked to cis-retinal. The protein is Opsin Rh4 (Rh4) of Drosophila virilis (Fruit fly).